The sequence spans 357 residues: Protein FAM118A (357 aa).

Position 1 is an N-acetylmethionine (M1). The helical transmembrane segment at 30–46 (LLLVIGTGVSAAVAPGI) threads the bilayer. S311 is modified (phosphoserine).

Belongs to the FAM118 family.

It localises to the membrane. The protein is Protein FAM118A (Fam118a) of Mus musculus (Mouse).